The following is a 291-amino-acid chain: Ribose-phosphate pyrophosphokinase (291 aa).

Residues 34-36 and 93-94 each bind ATP; these read DGE and RQ. Positions 127 and 165 each coordinate Mg(2+). Lys-188 is an active-site residue. D-ribose 5-phosphate contacts are provided by residues Arg-190, Asp-216, and 220–224; that span reads STGGT.

The protein belongs to the ribose-phosphate pyrophosphokinase family. Class III (archaeal) subfamily. Mg(2+) serves as cofactor.

It localises to the cytoplasm. The catalysed reaction is D-ribose 5-phosphate + ATP = 5-phospho-alpha-D-ribose 1-diphosphate + AMP + H(+). Its pathway is metabolic intermediate biosynthesis; 5-phospho-alpha-D-ribose 1-diphosphate biosynthesis; 5-phospho-alpha-D-ribose 1-diphosphate from D-ribose 5-phosphate (route I): step 1/1. Involved in the biosynthesis of the central metabolite phospho-alpha-D-ribosyl-1-pyrophosphate (PRPP) via the transfer of pyrophosphoryl group from ATP to 1-hydroxyl of ribose-5-phosphate (Rib-5-P). The protein is Ribose-phosphate pyrophosphokinase of Sulfurisphaera tokodaii (strain DSM 16993 / JCM 10545 / NBRC 100140 / 7) (Sulfolobus tokodaii).